A 491-amino-acid chain; its full sequence is Adenylosuccinate synthetase, chloroplastic (491 aa).

Residues 78 to 84 and 106 to 108 each bind GTP; these read GDEGKGK and GHT. The active-site Proton acceptor is D79. Mg(2+)-binding residues include D79 and G106. IMP-binding positions include 79 to 82, 104 to 107, T196, R210, Q290, T305, and R369; these read DEGK and NAGH. H107 serves as the catalytic Proton donor. 365–371 provides a ligand contact to substrate; the sequence is TTTGRPR. GTP-binding positions include R371, 397–399, and 480–482; these read KLD and GIG.

It belongs to the adenylosuccinate synthetase family. As to quaternary structure, homodimer. It depends on Mg(2+) as a cofactor.

The protein resides in the plastid. It is found in the chloroplast. It carries out the reaction IMP + L-aspartate + GTP = N(6)-(1,2-dicarboxyethyl)-AMP + GDP + phosphate + 2 H(+). It participates in purine metabolism; AMP biosynthesis via de novo pathway; AMP from IMP: step 1/2. Its function is as follows. Plays an important role in the de novo pathway and in the salvage pathway of purine nucleotide biosynthesis. Catalyzes the first committed step in the biosynthesis of AMP from IMP. In Populus trichocarpa (Western balsam poplar), this protein is Adenylosuccinate synthetase, chloroplastic.